The primary structure comprises 284 residues: Tropomyosin (284 aa).

A disordered region spans residues 1-47 (MDAIKKKMQAMKIEKDNAMDRADAAEEKARQQQERVEKLEEELRDTQ). Residues 1-284 (MDAIKKKMQA…DQTFQELSGY (284 aa)) adopt a coiled-coil conformation. A compositionally biased stretch (basic and acidic residues) spans 12 to 38 (KIEKDNAMDRADAAEEKARQQQERVEK).

The protein belongs to the tropomyosin family.

Its function is as follows. Tropomyosin, in association with the troponin complex, plays a central role in the calcium dependent regulation of muscle contraction. This Trichinella spiralis (Trichina worm) protein is Tropomyosin.